The primary structure comprises 524 residues: Ribonuclease Y (524 aa).

Residues 3–23 (IVINLFLIIFASVVFFAAGFF) traverse the membrane as a helical segment. The region spanning 214 to 274 (ALSVVHIQSD…LRREHAKLTL (61 aa)) is the KH domain. One can recognise an HD domain in the interval 340–432 (LLQHSREVAM…VDAANVISLA (93 aa)).

Belongs to the RNase Y family.

It is found in the cell membrane. In terms of biological role, endoribonuclease that initiates mRNA decay. This chain is Ribonuclease Y, found in Chlorobium luteolum (strain DSM 273 / BCRC 81028 / 2530) (Pelodictyon luteolum).